We begin with the raw amino-acid sequence, 471 residues long: Adenosylhomocysteinase (471 aa).

Thr60, Asp135, and Glu196 together coordinate substrate. Residue 197–199 (TTT) coordinates NAD(+). The substrate site is built by Lys226 and Asp230. NAD(+)-binding positions include Asn231, 260–265 (GYGDVG), Glu283, Asn318, 339–341 (IGH), and Asn387.

Belongs to the adenosylhomocysteinase family. The cofactor is NAD(+).

Its subcellular location is the cytoplasm. The catalysed reaction is S-adenosyl-L-homocysteine + H2O = L-homocysteine + adenosine. Its pathway is amino-acid biosynthesis; L-homocysteine biosynthesis; L-homocysteine from S-adenosyl-L-homocysteine: step 1/1. Its function is as follows. May play a key role in the regulation of the intracellular concentration of adenosylhomocysteine. This is Adenosylhomocysteinase from Chlorobium limicola (strain DSM 245 / NBRC 103803 / 6330).